An 884-amino-acid chain; its full sequence is Probable leucine-rich repeat receptor-like protein kinase At2g28990 (884 aa).

Residues 1-19 (MKIHLLLAMIGTFVVIIGA) form the signal peptide. At 20 to 508 (QDQEGFISLD…TEKKNKFLLP (489 aa)) the chain is on the extracellular side. Asn-70, Asn-177, Asn-217, Asn-231, Asn-251, Asn-284, Asn-298, Asn-334, Asn-418, Asn-427, Asn-438, Asn-459, and Asn-464 each carry an N-linked (GlcNAc...) asparagine glycan. 3 LRR repeats span residues 404–427 (SPTI…ILQN), 428–451 (FTQL…FLAN), and 452–476 (MKTL…LLDK). Residues 509 to 529 (VIASAASLVIVVVVVALFFVF) traverse the membrane as a helical segment. Residues 530 to 884 (RKKKASPSNL…IYNEVIPQAR (355 aa)) are Cytoplasmic-facing. The tract at residues 535–559 (SPSNLHAPPSMPVSNPGHNSQSESS) is disordered. Positions 546-559 (PVSNPGHNSQSESS) are enriched in polar residues. Thr-568 is subject to Phosphothreonine. One can recognise a Protein kinase domain in the interval 577–850 (NNFDKALGEG…RVVNELKECL (274 aa)). ATP contacts are provided by residues 583–591 (LGEGGFGVV) and Lys-605. Tyr-650 carries the post-translational modification Phosphotyrosine. Asp-702 functions as the Proton acceptor in the catalytic mechanism. Ser-736 is modified (phosphoserine). Phosphothreonine is present on residues Thr-737 and Thr-742. Tyr-750 is modified (phosphotyrosine).

The protein belongs to the protein kinase superfamily. Ser/Thr protein kinase family. Binds to the ammonium transporter AMT1-1.

The protein resides in the membrane. The catalysed reaction is L-seryl-[protein] + ATP = O-phospho-L-seryl-[protein] + ADP + H(+). It carries out the reaction L-threonyl-[protein] + ATP = O-phospho-L-threonyl-[protein] + ADP + H(+). This chain is Probable leucine-rich repeat receptor-like protein kinase At2g28990, found in Arabidopsis thaliana (Mouse-ear cress).